The chain runs to 451 residues: Glucose-6-phosphate isomerase (451 aa).

The active-site Proton donor is Glu291. Residues His312 and Lys426 contribute to the active site.

This sequence belongs to the GPI family.

Its subcellular location is the cytoplasm. It catalyses the reaction alpha-D-glucose 6-phosphate = beta-D-fructose 6-phosphate. It functions in the pathway carbohydrate biosynthesis; gluconeogenesis. It participates in carbohydrate degradation; glycolysis; D-glyceraldehyde 3-phosphate and glycerone phosphate from D-glucose: step 2/4. In terms of biological role, catalyzes the reversible isomerization of glucose-6-phosphate to fructose-6-phosphate. The polypeptide is Glucose-6-phosphate isomerase (Thermoanaerobacter sp. (strain X514)).